Consider the following 173-residue polypeptide: Chromophore lyase CpcS/CpeS 3 (173 aa).

The protein belongs to the CpcS/CpeS biliprotein lyase family.

Covalently attaches a chromophore to Cys residue(s) of phycobiliproteins. This chain is Chromophore lyase CpcS/CpeS 3, found in Trichodesmium erythraeum (strain IMS101).